A 486-amino-acid chain; its full sequence is PTS system N-acetylmuramic acid-specific EIIBC component (486 aa).

Positions 1 to 89 (MAKITQTMIS…NKLIESVING (89 aa)) constitute a PTS EIIB type-1 domain. The active-site Phosphocysteine intermediate; for EIIB activity is Cys-28. The PTS EIIC type-1 domain maps to 127–486 (SKFATIFTPL…FFGSKDVDLS (360 aa)). 10 consecutive transmembrane segments (helical) span residues 129-149 (FATI…LLGF), 170-190 (LIAY…ILIG), 196-216 (AFGG…LGYN), 230-250 (FFGY…AAII), 268-288 (MILT…VVIM), 312-332 (AAIL…QGFV), 347-367 (LFPI…ALYF), 381-401 (GAII…VTLP), 411-431 (IGGA…LPVG), and 453-473 (IFAG…VGFL).

Its subcellular location is the cell inner membrane. The enzyme catalyses N-acetyl-beta-D-muramate(out) + N(pros)-phospho-L-histidyl-[protein] = N-acetyl-beta-D-muramate 6-phosphate(in) + L-histidyl-[protein]. Functionally, the phosphoenolpyruvate-dependent sugar phosphotransferase system (sugar PTS), a major carbohydrate active transport system, catalyzes the phosphorylation of incoming sugar substrates concomitantly with their translocation across the cell membrane. This system is involved in N-acetylmuramic acid (MurNAc) transport, yielding cytoplasmic MurNAc-6-P. Is also able to take up anhydro-N-acetylmuramic acid (anhMurNAc), but cannot phosphorylate the carbon 6, probably because of the 1,6-anhydro ring. This Vibrio vulnificus (strain CMCP6) protein is PTS system N-acetylmuramic acid-specific EIIBC component (murP).